Reading from the N-terminus, the 522-residue chain is Maturase K (522 aa).

This sequence belongs to the intron maturase 2 family. MatK subfamily.

The protein localises to the plastid. The protein resides in the chloroplast. Usually encoded in the trnK tRNA gene intron. Probably assists in splicing its own and other chloroplast group II introns. This chain is Maturase K, found in Iris sanguinea (Japanese iris).